Reading from the N-terminus, the 357-residue chain is Eukaryotic translation initiation factor 3 subunit F (357 aa).

Positions 30–169 (VHIQPQAVFS…TKAYISAPVA (140 aa)) constitute an MPN domain. The tract at residues 309 to 357 (VGGDKEGGEKGKDGEDGGRGGRGGKRGGGGRGGHRGEPREPREPREPAE) is disordered. Composition is skewed to basic and acidic residues over residues 311 to 327 (GDKE…DGGR) and 342 to 357 (HRGE…EPAE).

This sequence belongs to the eIF-3 subunit F family. As to quaternary structure, component of the eukaryotic translation initiation factor 3 (eIF-3) complex.

It localises to the cytoplasm. In terms of biological role, component of the eukaryotic translation initiation factor 3 (eIF-3) complex, which is involved in protein synthesis of a specialized repertoire of mRNAs and, together with other initiation factors, stimulates binding of mRNA and methionyl-tRNAi to the 40S ribosome. The eIF-3 complex specifically targets and initiates translation of a subset of mRNAs involved in cell proliferation. This is Eukaryotic translation initiation factor 3 subunit F from Chaetomium globosum (strain ATCC 6205 / CBS 148.51 / DSM 1962 / NBRC 6347 / NRRL 1970) (Soil fungus).